Consider the following 104-residue polypeptide: Probable guanidinium efflux system subunit GdnD (104 aa).

4 helical membrane passes run 3-23, 31-51, 58-78, and 84-104; these read WICL…MNQF, WIFL…LAME, AYAV…ILFY, and GKRI…KLIS.

This sequence belongs to the drug/metabolite transporter (DMT) superfamily. Small multidrug resistance (SMR) (TC 2.A.7.1) family. YkkC/YkkD subfamily. In terms of assembly, the efflux pump is composed of GdnC and GdnD.

It localises to the cell membrane. In terms of biological role, probably involved in guanidinium transport. The chain is Probable guanidinium efflux system subunit GdnD from Bacillus licheniformis (strain ATCC 14580 / DSM 13 / JCM 2505 / CCUG 7422 / NBRC 12200 / NCIMB 9375 / NCTC 10341 / NRRL NRS-1264 / Gibson 46).